The chain runs to 233 residues: Orotidine 5'-phosphate decarboxylase (233 aa).

Substrate-binding positions include Asp13, Lys35, 62–71, Thr122, Arg182, Gln191, Gly211, and Arg212; that span reads DLKFHDIPNT. Lys64 functions as the Proton donor in the catalytic mechanism.

This sequence belongs to the OMP decarboxylase family. Type 1 subfamily. In terms of assembly, homodimer.

It carries out the reaction orotidine 5'-phosphate + H(+) = UMP + CO2. The protein operates within pyrimidine metabolism; UMP biosynthesis via de novo pathway; UMP from orotate: step 2/2. Catalyzes the decarboxylation of orotidine 5'-monophosphate (OMP) to uridine 5'-monophosphate (UMP). This is Orotidine 5'-phosphate decarboxylase from Pseudomonas putida (strain ATCC 700007 / DSM 6899 / JCM 31910 / BCRC 17059 / LMG 24140 / F1).